The chain runs to 113 residues: uncharacterized protein (113 aa).

An SWIM-type zinc finger spans residues 49 to 91; it reads FFVVVGKEEYVVEGGFCTCPDFLVNLKGKSPCAHIIAVEVAKI.

This is an uncharacterized protein from Archaeoglobus fulgidus (strain ATCC 49558 / DSM 4304 / JCM 9628 / NBRC 100126 / VC-16).